The primary structure comprises 90 residues: Probable Fe(2+)-trafficking protein (90 aa).

It belongs to the Fe(2+)-trafficking protein family.

Could be a mediator in iron transactions between iron acquisition and iron-requiring processes, such as synthesis and/or repair of Fe-S clusters in biosynthetic enzymes. The polypeptide is Probable Fe(2+)-trafficking protein (Nitrosospira multiformis (strain ATCC 25196 / NCIMB 11849 / C 71)).